We begin with the raw amino-acid sequence, 332 residues long: Fructose-bisphosphate aldolase (332 aa).

Position 56 (S56) interacts with D-glyceraldehyde 3-phosphate. The Proton donor role is filled by D93. The Zn(2+) site is built by H94, D115, E147, and H191. G192 contacts dihydroxyacetone phosphate. H234 is a binding site for Zn(2+). Residues 235–237 (GAS) and 277–280 (NIDS) contribute to the dihydroxyacetone phosphate site.

It belongs to the class II fructose-bisphosphate aldolase family. Homodimer. Requires Zn(2+) as cofactor.

The catalysed reaction is beta-D-fructose 1,6-bisphosphate = D-glyceraldehyde 3-phosphate + dihydroxyacetone phosphate. Its pathway is carbohydrate degradation; glycolysis; D-glyceraldehyde 3-phosphate and glycerone phosphate from D-glucose: step 4/4. Functionally, catalyzes the aldol condensation of dihydroxyacetone phosphate (DHAP or glycerone-phosphate) with glyceraldehyde 3-phosphate (G3P) to form fructose 1,6-bisphosphate (FBP) in gluconeogenesis and the reverse reaction in glycolysis. The polypeptide is Fructose-bisphosphate aldolase (fba) (Treponema pallidum (strain Nichols)).